The following is a 61-amino-acid chain: Large ribosomal subunit protein uL30 (61 aa).

The protein belongs to the universal ribosomal protein uL30 family. Part of the 50S ribosomal subunit.

This Bifidobacterium adolescentis (strain ATCC 15703 / DSM 20083 / NCTC 11814 / E194a) protein is Large ribosomal subunit protein uL30.